A 347-amino-acid chain; its full sequence is KRR1 small subunit processome component homolog (347 aa).

Positions 124 to 194 (GCDIIKIGNL…VRDIVLETMN (71 aa)) constitute a KH domain. A compositionally biased stretch (basic residues) spans 231–246 (NKNLSKRKQPKVKKPK). The segment at 231 to 347 (NKNLSKRKQP…LLKANKKSKS (117 aa)) is disordered. Positions 271–304 (FLNKEQKQAKRQQERQTKQAEAAKKQDERRNKDF) form a coiled coil. Composition is skewed to basic and acidic residues over residues 272–303 (LNKE…RNKD) and 318–329 (KANDNDSSDSRV). Over residues 337–347 (KLLKANKKSKS) the composition is skewed to basic residues.

This sequence belongs to the KRR1 family. Monomer. Component of the ribosomal small subunit (SSU) processome.

It is found in the nucleus. The protein resides in the nucleolus. Functionally, required for 40S ribosome biogenesis. Involved in nucleolar processing of pre-18S ribosomal RNA and ribosome assembly. Binds to RNA. Required for female germline development, cell viability during eye development and for survival of dividing cells and epithelial cells during early wing disk development. The protein is KRR1 small subunit processome component homolog of Drosophila willistoni (Fruit fly).